The chain runs to 552 residues: T-box transcription factor TBX4 (552 aa).

The span at 1–14 shows a compositional bias: basic and acidic residues; that stretch reads MLQDKGLSESEEAF. The segment at 1–50 is disordered; that stretch reads MLQDKGLSESEEAFRAPGPALGEASNTSTTNAPEPALATPGLSGAALSSP. Residues 76 to 256 constitute a DNA-binding region (T-box); the sequence is LHEKELWKKF…NNPFAKGFRG (181 aa). Ser-514 carries the post-translational modification Phosphoserine.

The protein localises to the nucleus. Transcriptional regulator that has an essential role in the organogenesis of lungs, pelvis, and hindlimbs. In Mus musculus (Mouse), this protein is T-box transcription factor TBX4 (Tbx4).